Consider the following 151-residue polypeptide: Large ribosomal subunit protein bL9 (151 aa).

Belongs to the bacterial ribosomal protein bL9 family.

Its function is as follows. Binds to the 23S rRNA. This chain is Large ribosomal subunit protein bL9, found in Chlorobium luteolum (strain DSM 273 / BCRC 81028 / 2530) (Pelodictyon luteolum).